We begin with the raw amino-acid sequence, 600 residues long: NAD-dependent malic enzyme, mitochondrial (600 aa).

A mitochondrion-targeting transit peptide spans 1-68; that stretch reads MTRTPFTLSL…NMPIAAPVRT (68 aa). R93 is a binding site for fumarate. Catalysis depends on Y138, which acts as the Proton donor. R194 provides a ligand contact to (S)-malate. Residue R194 coordinates NAD(+). The Proton acceptor role is filled by K212. Residues E283, D284, and D307 each contribute to the a divalent metal cation site. Positions 344 and 347 each coordinate NAD(+). Residues N458 and N502 each contribute to the (S)-malate site.

This sequence belongs to the malic enzymes family. Requires Mg(2+) as cofactor. The cofactor is Mn(2+).

Its subcellular location is the mitochondrion matrix. The protein resides in the cytoplasm. It is found in the cytosol. The protein localises to the nucleus. It catalyses the reaction (S)-malate + NAD(+) = pyruvate + CO2 + NADH. It carries out the reaction oxaloacetate + H(+) = pyruvate + CO2. Functionally, NAD-dependent mitochondrial malic enzyme that catalyzes the oxidative decarboxylation of malate to pyruvate. This Cryptococcus neoformans var. grubii serotype A (strain H99 / ATCC 208821 / CBS 10515 / FGSC 9487) (Filobasidiella neoformans var. grubii) protein is NAD-dependent malic enzyme, mitochondrial.